The following is a 562-amino-acid chain: Dihydroxy-acid dehydratase (562 aa).

Aspartate 80 provides a ligand contact to Mg(2+). Cysteine 121 is a binding site for [2Fe-2S] cluster. Residues aspartate 122 and lysine 123 each contribute to the Mg(2+) site. Lysine 123 bears the N6-carboxylysine mark. Cysteine 194 serves as a coordination point for [2Fe-2S] cluster. Residue glutamate 446 coordinates Mg(2+). Residue serine 472 is the Proton acceptor of the active site.

The protein belongs to the IlvD/Edd family. In terms of assembly, homodimer. It depends on [2Fe-2S] cluster as a cofactor. Mg(2+) serves as cofactor.

It carries out the reaction (2R)-2,3-dihydroxy-3-methylbutanoate = 3-methyl-2-oxobutanoate + H2O. The enzyme catalyses (2R,3R)-2,3-dihydroxy-3-methylpentanoate = (S)-3-methyl-2-oxopentanoate + H2O. It functions in the pathway amino-acid biosynthesis; L-isoleucine biosynthesis; L-isoleucine from 2-oxobutanoate: step 3/4. Its pathway is amino-acid biosynthesis; L-valine biosynthesis; L-valine from pyruvate: step 3/4. Functions in the biosynthesis of branched-chain amino acids. Catalyzes the dehydration of (2R,3R)-2,3-dihydroxy-3-methylpentanoate (2,3-dihydroxy-3-methylvalerate) into 2-oxo-3-methylpentanoate (2-oxo-3-methylvalerate) and of (2R)-2,3-dihydroxy-3-methylbutanoate (2,3-dihydroxyisovalerate) into 2-oxo-3-methylbutanoate (2-oxoisovalerate), the penultimate precursor to L-isoleucine and L-valine, respectively. This is Dihydroxy-acid dehydratase from Macrococcus caseolyticus (strain JCSC5402) (Macrococcoides caseolyticum).